Reading from the N-terminus, the 308-residue chain is Cytochrome c biogenesis protein CcsA (308 aa).

The next 7 helical transmembrane spans lie at 2 to 22 (IVST…SILI), 44 to 64 (GMLV…IYLG), 71 to 91 (LSES…IAYF), 143 to 163 (MILG…LMVI), 212 to 232 (VIGL…VWAN), 239 to 259 (WSWD…AIYL), and 273 to 293 (AIVA…VNLV).

Belongs to the CcmF/CycK/Ccl1/NrfE/CcsA family. As to quaternary structure, may interact with Ccs1.

It is found in the plastid membrane. Its function is as follows. Required during biogenesis of c-type cytochromes (cytochrome c6 and cytochrome f) at the step of heme attachment. The chain is Cytochrome c biogenesis protein CcsA from Cuscuta exaltata (Tall dodder).